The following is a 182-amino-acid chain: Adenine phosphoribosyltransferase (182 aa).

The protein belongs to the purine/pyrimidine phosphoribosyltransferase family. As to quaternary structure, homodimer.

It localises to the cytoplasm. The catalysed reaction is AMP + diphosphate = 5-phospho-alpha-D-ribose 1-diphosphate + adenine. It participates in purine metabolism; AMP biosynthesis via salvage pathway; AMP from adenine: step 1/1. In terms of biological role, catalyzes a salvage reaction resulting in the formation of AMP, that is energically less costly than de novo synthesis. This Ectopseudomonas mendocina (strain ymp) (Pseudomonas mendocina) protein is Adenine phosphoribosyltransferase.